The sequence spans 358 residues: F-box protein At4g35733 (358 aa).

Residues 4-51 form the F-box domain; the sequence is ATVWSDLPGELLDHIANGLFSKVELLRFRSICKTFRSAVDSDKNFLDH.

Part of a SCF (ASK-cullin-F-box) protein ligase complex.

The protein operates within protein modification; protein ubiquitination. Component of SCF(ASK-cullin-F-box) E3 ubiquitin ligase complexes, which may mediate the ubiquitination and subsequent proteasomal degradation of target proteins. This Arabidopsis thaliana (Mouse-ear cress) protein is F-box protein At4g35733.